An 81-amino-acid chain; its full sequence is Acyl carrier protein (81 aa).

The 79-residue stretch at M1 to Q79 folds into the Carrier domain. At S39 the chain carries O-(pantetheine 4'-phosphoryl)serine.

It belongs to the acyl carrier protein (ACP) family. Post-translationally, 4'-phosphopantetheine is transferred from CoA to a specific serine of apo-ACP by AcpS. This modification is essential for activity because fatty acids are bound in thioester linkage to the sulfhydryl of the prosthetic group.

Its subcellular location is the cytoplasm. It functions in the pathway lipid metabolism; fatty acid biosynthesis. Its function is as follows. Carrier of the growing fatty acid chain in fatty acid biosynthesis. The protein is Acyl carrier protein of Rubrobacter xylanophilus (strain DSM 9941 / JCM 11954 / NBRC 16129 / PRD-1).